A 184-amino-acid chain; its full sequence is Large ribosomal subunit protein uL6 (184 aa).

It belongs to the universal ribosomal protein uL6 family. As to quaternary structure, part of the 50S ribosomal subunit.

Functionally, this protein binds to the 23S rRNA, and is important in its secondary structure. It is located near the subunit interface in the base of the L7/L12 stalk, and near the tRNA binding site of the peptidyltransferase center. The protein is Large ribosomal subunit protein uL6 of Aster yellows witches'-broom phytoplasma (strain AYWB).